The chain runs to 156 residues: Protein Smg homolog (156 aa).

The protein belongs to the Smg family.

The chain is Protein Smg homolog from Halorhodospira halophila (strain DSM 244 / SL1) (Ectothiorhodospira halophila (strain DSM 244 / SL1)).